Consider the following 80-residue polypeptide: UPF0270 protein AHA_0994 (80 aa).

Belongs to the UPF0270 family.

The chain is UPF0270 protein AHA_0994 from Aeromonas hydrophila subsp. hydrophila (strain ATCC 7966 / DSM 30187 / BCRC 13018 / CCUG 14551 / JCM 1027 / KCTC 2358 / NCIMB 9240 / NCTC 8049).